A 189-amino-acid polypeptide reads, in one-letter code: Gluconokinase (189 aa).

16 to 23 (GVSGAGKS) contributes to the ATP binding site.

The protein belongs to the gluconokinase GntK/GntV family. As to quaternary structure, monomer.

The catalysed reaction is D-gluconate + ATP = 6-phospho-D-gluconate + ADP + H(+). It functions in the pathway carbohydrate acid metabolism; D-gluconate degradation. Phosphorylates gluconate to 6-phosphogluconate. This is Gluconokinase from Arabidopsis thaliana (Mouse-ear cress).